The sequence spans 275 residues: Urease accessory protein UreD (275 aa).

It belongs to the UreD family. UreD, UreF and UreG form a complex that acts as a GTP-hydrolysis-dependent molecular chaperone, activating the urease apoprotein by helping to assemble the nickel containing metallocenter of UreC. The UreE protein probably delivers the nickel.

It localises to the cytoplasm. Required for maturation of urease via the functional incorporation of the urease nickel metallocenter. The chain is Urease accessory protein UreD from Cereibacter sphaeroides (strain ATCC 17023 / DSM 158 / JCM 6121 / CCUG 31486 / LMG 2827 / NBRC 12203 / NCIMB 8253 / ATH 2.4.1.) (Rhodobacter sphaeroides).